The sequence spans 56 residues: Large ribosomal subunit protein bL32 (56 aa).

Positions 1 to 20 are enriched in basic residues; sequence MAVPKKKKSKSKRNHRHAVW. The interval 1–21 is disordered; it reads MAVPKKKKSKSKRNHRHAVWK.

This sequence belongs to the bacterial ribosomal protein bL32 family.

The chain is Large ribosomal subunit protein bL32 from Prochlorococcus marinus (strain MIT 9312).